Here is a 184-residue protein sequence, read N- to C-terminus: dITP/XTP pyrophosphatase (184 aa).

Substrate is bound at residue 8 to 13; sequence TGNKGK. Mg(2+)-binding residues include Glu37 and Asp66. Asp66 (proton acceptor) is an active-site residue. Substrate-binding positions include Ser67, 142–145, Lys163, and 168–169; these read FGYD and HR.

It belongs to the HAM1 NTPase family. In terms of assembly, homodimer. It depends on Mg(2+) as a cofactor.

The enzyme catalyses XTP + H2O = XMP + diphosphate + H(+). It catalyses the reaction dITP + H2O = dIMP + diphosphate + H(+). The catalysed reaction is ITP + H2O = IMP + diphosphate + H(+). Its function is as follows. Pyrophosphatase that catalyzes the hydrolysis of nucleoside triphosphates to their monophosphate derivatives, with a high preference for the non-canonical purine nucleotides XTP (xanthosine triphosphate), dITP (deoxyinosine triphosphate) and ITP. Seems to function as a house-cleaning enzyme that removes non-canonical purine nucleotides from the nucleotide pool, thus preventing their incorporation into DNA/RNA and avoiding chromosomal lesions. The chain is dITP/XTP pyrophosphatase from Methanosarcina mazei (strain ATCC BAA-159 / DSM 3647 / Goe1 / Go1 / JCM 11833 / OCM 88) (Methanosarcina frisia).